The sequence spans 377 residues: Floricaula/leafy homolog (377 aa).

Basic and acidic residues predominate over residues 116 to 126; the sequence is RRRLDEEDPRR. The disordered stretch occupies residues 116–190; the sequence is RRRLDEEDPR…RKKGQRKVVD (75 aa). Positions 131 to 141 are enriched in polar residues; the sequence is SGDNNTNTLDA. DNA-binding regions lie at residues 206 to 210, 275 to 282, and 346 to 349; these read REHPF, NKPKMRHY, and YVPT.

Belongs to the FLO/LFY family. As to expression, in developing inflorescences, leaf primordia and very young leaves.

It is found in the nucleus. Functionally, probable transcription factor. This is Floricaula/leafy homolog (FL) from Populus trichocarpa (Western balsam poplar).